Reading from the N-terminus, the 451-residue chain is Serine--tRNA ligase, cytoplasmic (451 aa).

Residue 236-238 (TSE) coordinates L-serine. Residues 267 to 269 (RKE) and Val-283 each bind ATP. Glu-290 is an L-serine binding site. Residue 354–357 (ELVS) participates in ATP binding. Thr-392 contributes to the L-serine binding site.

Belongs to the class-II aminoacyl-tRNA synthetase family. Type-1 seryl-tRNA synthetase subfamily. Homodimer. The tRNA molecule binds across the dimer.

The protein localises to the cytoplasm. It catalyses the reaction tRNA(Ser) + L-serine + ATP = L-seryl-tRNA(Ser) + AMP + diphosphate + H(+). The enzyme catalyses tRNA(Sec) + L-serine + ATP = L-seryl-tRNA(Sec) + AMP + diphosphate + H(+). Its pathway is aminoacyl-tRNA biosynthesis; selenocysteinyl-tRNA(Sec) biosynthesis; L-seryl-tRNA(Sec) from L-serine and tRNA(Sec): step 1/1. In terms of biological role, catalyzes the attachment of serine to tRNA(Ser). Is also able to aminoacylate tRNA(Sec) with serine, to form the misacylated tRNA L-seryl-tRNA(Sec), which will be further converted into selenocysteinyl-tRNA(Sec). The polypeptide is Serine--tRNA ligase, cytoplasmic (serS) (Dictyostelium discoideum (Social amoeba)).